Here is a 437-residue protein sequence, read N- to C-terminus: Elongator complex protein 4 (437 aa).

The segment at 179–247 (FSKSSSPTTP…TKTGSQDSPL (69 aa)) is disordered. Over residues 181–192 (KSSSPTTPSLEQ) the composition is skewed to polar residues. Serine 183 is modified (phosphoserine). Positions 220 to 237 (SANNNNNNNNNSSSVTSS) are enriched in low complexity. Serine 242 carries the phosphoserine modification.

Belongs to the ELP4 family. In terms of assembly, component of the elongator complex composed of Elp1, Elp2, Elp3, Elp4, Elp5 and Elp6. The elongator complex associates with and stabilizes microtubules; efficient interaction requires the full complex.

The protein localises to the cytoplasm. The protein resides in the nucleus. It is found in the cytoskeleton. Its subcellular location is the spindle. The protein operates within tRNA modification; 5-methoxycarbonylmethyl-2-thiouridine-tRNA biosynthesis. Component of the elongator complex, which is required for multiple tRNA modifications, including mcm5U (5-methoxycarbonylmethyl uridine), mcm5s2U (5-methoxycarbonylmethyl-2-thiouridine), and ncm5U (5-carbamoylmethyl uridine). The elongator complex catalyzes the formation of carboxymethyluridine in the wobble base at position 34 in tRNAs. Binding by the elongator complex stabilizes microtubules and promotes their growth. This induces central spindle asymmetry, promoting polarized signaling endosome trafficking during asymmetric cell division and cell fate assignation of sensory organ precursor cells. The polypeptide is Elongator complex protein 4 (Drosophila melanogaster (Fruit fly)).